We begin with the raw amino-acid sequence, 166 residues long: Signal peptidase complex catalytic subunit SEC11 (166 aa).

Residues 1–9 (MNIRQQLTQ) are Cytoplasmic-facing. Residues 10-30 (LLTLGYVFASAFMLWKTLSVV) form a helical; Signal-anchor for type II membrane protein membrane-spanning segment. Topologically, residues 31 to 166 (ANLHSPIVVV…LGLSSLFSNE (136 aa)) are lumenal. Residues serine 44, histidine 83, and aspartate 108 each act as charge relay system in the active site. Positions 152–163 (GLLGLLGLSSLF) are C-terminal short (CTS) helix.

The protein belongs to the peptidase S26B family. Component of the signal peptidase complex (SPC) composed of a catalytic subunit SEC11 and three accessory subunits SPC1, SPC2 and SPC3. The complex induces a local thinning of the ER membrane which is used to measure the length of the signal peptide (SP) h-region of protein substrates. This ensures the selectivity of the complex towards h-regions shorter than 18-20 amino acids. SPC associates with the translocon complex.

Its subcellular location is the endoplasmic reticulum membrane. It carries out the reaction Cleavage of hydrophobic, N-terminal signal or leader sequences from secreted and periplasmic proteins.. Functionally, catalytic component of the signal peptidase complex (SPC) which catalyzes the cleavage of N-terminal signal sequences from nascent proteins as they are translocated into the lumen of the endoplasmic reticulum. Specifically cleaves N-terminal signal peptides that contain a hydrophobic alpha-helix (h-region) shorter than 18-20 amino acids. The sequence is that of Signal peptidase complex catalytic subunit SEC11 (SEC11) from Lodderomyces elongisporus (strain ATCC 11503 / CBS 2605 / JCM 1781 / NBRC 1676 / NRRL YB-4239) (Yeast).